The sequence spans 92 residues: Small ribosomal subunit protein uS19 (92 aa).

The protein belongs to the universal ribosomal protein uS19 family.

Functionally, protein S19 forms a complex with S13 that binds strongly to the 16S ribosomal RNA. This is Small ribosomal subunit protein uS19 from Mesorhizobium japonicum (strain LMG 29417 / CECT 9101 / MAFF 303099) (Mesorhizobium loti (strain MAFF 303099)).